We begin with the raw amino-acid sequence, 180 residues long: MNPAPNLVMIGPMGAGKSSIGRRIAKHFSLHFADTDHAIVERAGTNISAIFKYSGEPEFRRLEREVLHDLLNHENQLIATGGGTILDPENRRCMQERGFVVFLKINVNTQLERLAHDRYRPLLQQIDRKQVLSDLYATRQPLYQQIADMIVTTDHMSPNTATAQLILDLTAHWQKSSNAA.

14–19 (GAGKSS) is an ATP binding site. Residue S18 participates in Mg(2+) binding. 3 residues coordinate substrate: D36, R60, and G82. Position 120 (R120) interacts with ATP. R139 contacts substrate.

Belongs to the shikimate kinase family. In terms of assembly, monomer. Requires Mg(2+) as cofactor.

It localises to the cytoplasm. It carries out the reaction shikimate + ATP = 3-phosphoshikimate + ADP + H(+). It participates in metabolic intermediate biosynthesis; chorismate biosynthesis; chorismate from D-erythrose 4-phosphate and phosphoenolpyruvate: step 5/7. In terms of biological role, catalyzes the specific phosphorylation of the 3-hydroxyl group of shikimic acid using ATP as a cosubstrate. The polypeptide is Shikimate kinase (Xylella fastidiosa (strain 9a5c)).